A 256-amino-acid polypeptide reads, in one-letter code: uncharacterized protein (256 aa).

2 disordered regions span residues 1-171 (MARG…QLKH) and 185-256 (NGQR…LYND). Positions 14-39 (KRRSKVQEEEEHVEGSEEEVEEPEQK) form a coiled coil. Acidic residues-rich tracts occupy residues 21-35 (EEEEHVEGSEEEVEE) and 64-92 (SDDDDEDDLSELDVVVEDDNPVETSDNDE). Over residues 108 to 129 (NRGDHESHDDNSDNEEQGDRGN) the composition is skewed to basic and acidic residues. Over residues 192–205 (KRGGPPRGSFGQRG) the composition is skewed to gly residues. Over residues 219-234 (RQGDTRDTRDTRDTRL) the composition is skewed to basic and acidic residues.

This is an uncharacterized protein from Acanthamoeba polyphaga (Amoeba).